We begin with the raw amino-acid sequence, 262 residues long: Octopine permease ATP-binding protein P (262 aa).

Residues 9 to 254 (VKLTGIRKNF…PRTERFRQFL (246 aa)) form the ABC transporter domain. ATP is bound at residue 41-48 (GSSGSGKS).

The protein belongs to the ABC transporter superfamily.

The protein localises to the cell inner membrane. Its function is as follows. Component of the octopine active transport system probably consisting of four subunits: Q, M, P and T. This chain is Octopine permease ATP-binding protein P (occP), found in Rhizobium meliloti (Ensifer meliloti).